The sequence spans 422 residues: Tyrosine--tRNA ligase (422 aa).

Position 35 (Tyr-35) interacts with L-tyrosine. The short motif at 40-49 (PTAPSLHLGN) is the 'HIGH' region element. L-tyrosine is bound by residues Tyr-170 and Gln-174. The 'KMSKS' region motif lies at 231–235 (KFGKT). Lys-234 lines the ATP pocket. The 67-residue stretch at 353-419 (APVVDLFAEV…GKKNLAAVEV (67 aa)) folds into the S4 RNA-binding domain.

The protein belongs to the class-I aminoacyl-tRNA synthetase family. TyrS type 1 subfamily. Homodimer.

The protein localises to the cytoplasm. The catalysed reaction is tRNA(Tyr) + L-tyrosine + ATP = L-tyrosyl-tRNA(Tyr) + AMP + diphosphate + H(+). Catalyzes the attachment of tyrosine to tRNA(Tyr) in a two-step reaction: tyrosine is first activated by ATP to form Tyr-AMP and then transferred to the acceptor end of tRNA(Tyr). In Streptomyces avermitilis (strain ATCC 31267 / DSM 46492 / JCM 5070 / NBRC 14893 / NCIMB 12804 / NRRL 8165 / MA-4680), this protein is Tyrosine--tRNA ligase.